The primary structure comprises 242 residues: MSKSRLTVFSFVRRFLLRLMVVLAVFWGGGIALFSVAPVPFSAVMAERQVSAWLHGNFRYVAHSDWVSMDQISPWMGLAVIAAEDQKFPEHWGFDVASIEQALAHNERNENRIRGASTISQQTAKNLFLWDGRSWVRKGLEAGLTLGIETVWSKKRILTVYLNIAEFGDGVFGVEAAAQRYFHKPASKLTRSEAALLAAVLPNPLRFKVSAPSGYVRGRQAWILRQMYQLGGESFMQQHQLD.

A helical transmembrane segment spans residues 19–39 (LMVVLAVFWGGGIALFSVAPV).

This sequence belongs to the glycosyltransferase 51 family.

It is found in the cell inner membrane. It catalyses the reaction [GlcNAc-(1-&gt;4)-Mur2Ac(oyl-L-Ala-gamma-D-Glu-L-Lys-D-Ala-D-Ala)](n)-di-trans,octa-cis-undecaprenyl diphosphate + beta-D-GlcNAc-(1-&gt;4)-Mur2Ac(oyl-L-Ala-gamma-D-Glu-L-Lys-D-Ala-D-Ala)-di-trans,octa-cis-undecaprenyl diphosphate = [GlcNAc-(1-&gt;4)-Mur2Ac(oyl-L-Ala-gamma-D-Glu-L-Lys-D-Ala-D-Ala)](n+1)-di-trans,octa-cis-undecaprenyl diphosphate + di-trans,octa-cis-undecaprenyl diphosphate + H(+). It functions in the pathway cell wall biogenesis; peptidoglycan biosynthesis. Its function is as follows. Peptidoglycan polymerase that catalyzes glycan chain elongation from lipid-linked precursors. This is Biosynthetic peptidoglycan transglycosylase from Escherichia coli O17:K52:H18 (strain UMN026 / ExPEC).